Here is a 1149-residue protein sequence, read N- to C-terminus: Bone sialoprotein-binding protein (1149 aa).

The N-terminal stretch at 1–52 (MINRDNKKAITKKGMISNRLNKFSIRKYTVGTASILVGTTLIFGLGNQEAKA) is a signal peptide. The interval 53-601 (AENTSTENAK…GDGTVKPEEK (549 aa)) is ligand binding A region. 2 disordered regions span residues 54–249 (ENTS…TAPT) and 675–697 (LPTK…VTVK). Basic and acidic residues predominate over residues 61–75 (AKQDEASASDNKEVV). Residues 77-89 (ETENNSTQKNDLT) are compositionally biased toward polar residues. Over residues 92-106 (IKKETNTDSHQEAKE) the composition is skewed to basic and acidic residues. Positions 109-126 (TTSSTQQQQNNATTSTET) are enriched in low complexity. The span at 130 to 145 (NIEKENVKPSTDKTAT) shows a compositional bias: basic and acidic residues. Residues 158–205 (PNNTNNDVTTKPSTSEIQTTPTTPQESTNIENSQPQPTPSKVDNQVTD) are compositionally biased toward polar residues. A compositionally biased stretch (basic and acidic residues) spans 216-241 (SKEELKNNPEKLKELVRNDSNTDRST). CNA-B domains are found at residues 602–714 (LYKI…YKEP), 715–824 (KYNL…YKTP), and 825–935 (KYSL…EEDT). Positions 896-1124 (TQTGTNTTED…TGSENNGSNN (229 aa)) are disordered. Composition is skewed to acidic residues over residues 903–913 (TEDDKDADGGE) and 930–1088 (YFEE…DSDS). Positions 1112 to 1116 (LPETG) match the LPXTG sorting signal motif. Threonine 1115 is subject to Pentaglycyl murein peptidoglycan amidated threonine. The propeptide at 1116–1149 (GSENNGSNNATLFGGLFAALGSLLLFGRRKKQNK) is removed by sortase.

The protein belongs to the serine-aspartate repeat-containing protein (SDr) family.

The protein localises to the secreted. The protein resides in the cell wall. In terms of biological role, specifically interacts with bone sialoprotein (BSP), a glycoprotein of bone and dentin extracellular matrix. Could contribute to staphylococcal osteomyelitis and arthritis. This Staphylococcus aureus protein is Bone sialoprotein-binding protein (bbp).